The primary structure comprises 536 residues: Phosphoenolpyruvate carboxykinase (ATP) (536 aa).

Residues arginine 62, tyrosine 203, and lysine 209 each coordinate substrate. Residues lysine 209, histidine 228, and 244 to 252 contribute to the ATP site; that span reads GLSGTGKTT. Residues lysine 209 and histidine 228 each coordinate Mn(2+). Residue aspartate 265 coordinates Mn(2+). ATP-binding positions include glutamate 293, arginine 329, 445–446, and threonine 451; that span reads RI. Arginine 329 is a binding site for substrate.

This sequence belongs to the phosphoenolpyruvate carboxykinase (ATP) family. Monomer. The cofactor is Mn(2+).

The protein localises to the cytoplasm. The enzyme catalyses oxaloacetate + ATP = phosphoenolpyruvate + ADP + CO2. The protein operates within carbohydrate biosynthesis; gluconeogenesis. In terms of biological role, involved in the gluconeogenesis. Catalyzes the conversion of oxaloacetate (OAA) to phosphoenolpyruvate (PEP) through direct phosphoryl transfer between the nucleoside triphosphate and OAA. This chain is Phosphoenolpyruvate carboxykinase (ATP), found in Glaesserella parasuis serovar 5 (strain SH0165) (Haemophilus parasuis).